The following is a 798-amino-acid chain: Heterogeneous nuclear ribonucleoprotein U (798 aa).

N-acetylserine is present on S2. S4 carries the phosphoserine modification. Residues 8–42 (VKKLKVSELKEELKKRRLSDKGLKADLMDRLQAAL) enclose the SAP domain. An N6-acetyllysine mark is found at K17 and K21. A disordered region spans residues 41-229 (ALDNEAGGRP…VKRPREDHGR (189 aa)). Phosphoserine is present on S58. 2 stretches are compositionally biased toward low complexity: residues 71–80 (AGLEQEAAAG) and 103–113 (ENGAAGAADAG). 2 stretches are compositionally biased toward acidic residues: residues 114 to 128 (AMEEEEAASEDENGD) and 134 to 147 (EGEDELGDEEEGAG). The span at 153-169 (GEQQSQPPAAAQQASQQ) shows a compositional bias: low complexity. K179 carries the post-translational modification N6-acetyllysine. Position 180 is an ADP-ribosylserine (S180). Positions 192 to 203 (APPGARQGQQQA) are enriched in low complexity. Residues 207-229 (GKTEQKAGDKKRGVKRPREDHGR) show a composition bias toward basic and acidic residues. R229 is subject to Citrulline. K239 is modified (N6-acetyllysine; alternate). K239 participates in a covalent cross-link: Glycyl lysine isopeptide (Lys-Gly) (interchain with G-Cter in SUMO1); alternate. K239 participates in a covalent cross-link: Glycyl lysine isopeptide (Lys-Gly) (interchain with G-Cter in SUMO2); alternate. The residue at position 240 (Y240) is a Phosphotyrosine. S241 and S245 each carry phosphoserine. The 197-residue stretch at 242–438 (RAKSPQPPVE…VEFNFGQKEK (197 aa)) folds into the B30.2/SPRY domain. T260 is subject to Phosphothreonine. N6-acetyllysine is present on K326. An ATPase domain region spans residues 462-646 (PKGPEEKKDC…QKLLEQYKEE (185 aa)). K469 participates in a covalent cross-link: Glycyl lysine isopeptide (Lys-Gly) (interchain with G-Cter in SUMO2). Position 478-485 (478-485 (GLPGAGKT)) interacts with ATP. K490 and K498 each carry N6-acetyllysine; alternate. Glycyl lysine isopeptide (Lys-Gly) (interchain with G-Cter in SUMO2); alternate cross-links involve residues K490 and K498. Position 506 is a phosphothreonine (T506). A Glycyl lysine isopeptide (Lys-Gly) (interchain with G-Cter in SUMO2) cross-link involves residue K510. K525 is modified (N6-acetyllysine). The residue at position 539 (K539) is an N6-acetyllysine; alternate. K539 participates in a covalent cross-link: Glycyl lysine isopeptide (Lys-Gly) (interchain with G-Cter in SUMO2); alternate. Residue K548 forms a Glycyl lysine isopeptide (Lys-Gly) (interchain with G-Cter in SUMO2) linkage. Phosphothreonine is present on T556. Glycyl lysine isopeptide (Lys-Gly) (interchain with G-Cter in SUMO2) cross-links involve residues K583 and K600. The actin-binding stretch occupies residues 585 to 600 (EDYKQRTQKKAEVEGK). K609 is modified (N6-acetyllysine; alternate). A Glycyl lysine isopeptide (Lys-Gly) (interchain with G-Cter in SUMO2); alternate cross-link involves residue K609. A coiled-coil region spans residues 624-651 (DEITYVELQKEEAQKLLEQYKEESKKAL). Glycyl lysine isopeptide (Lys-Gly) (interchain with G-Cter in SUMO2) cross-links involve residues K638 and K644. Residues 645 to 657 (EESKKALPPEKKQ) show a composition bias toward basic and acidic residues. Residues 645 to 727 (EESKKALPPE…GSGGIGYPYP (83 aa)) are disordered. An Omega-N-methylarginine modification is found at R676. The span at 684-702 (GGFNMRGGNFRGGAPGNRG) shows a compositional bias: gly residues. The tract at residues 688-713 (MRGGNFRGGAPGNRGGYNRRGNMPQR) is RNA-binding RGG-box. R689, R694, and R701 each carry asymmetric dimethylarginine. Asymmetric dimethylarginine; alternate is present on residues R707 and R713. An omega-N-methylarginine; alternate mark is found at R707 and R713. Gly residues predominate over residues 713–723 (RGGGGGSGGIG). R728 and R735 each carry asymmetric dimethylarginine. The disordered stretch occupies residues 743–772 (NYNRGGMPNRGNYNQNFRGRGNNRGYKNQS). K787 is subject to N6-acetyllysine; alternate. K787 participates in a covalent cross-link: Glycyl lysine isopeptide (Lys-Gly) (interchain with G-Cter in SUMO2); alternate.

Oligomer (via ATPase domain and RNA-binding RGG-box region); oligomerization occurs upon ATP-binding in a chromatin-associated RNAs (caRNAs)- and transcription-dependent manner and is required for chromatin decompaction. ATP hydrolysis is required to cycle from an oligomeric to monomeric state to compact chromatin. Component of the coding region determinant (CRD)-mediated complex, composed of DHX9, HNRNPU, IGF2BP1, SYNCRIP and YBX1. Identified in the spliceosome C complex. Identified in a IGF2BP1-dependent mRNP granule complex containing untranslated mRNAs. Associates with heterogeneous nuclear ribonucleoprotein (hnRNP) particles. Associates (via middle region) with the C-terminal domain (CTD) RNA polymerase II (Pol II) holoenzyme; this association occurs in a RNA-independent manner. Associates (via middle region) with the core-TFIIH basal transcription factor complex; this association inhibits the CTD phosphorylation of RNA polymerase II holoenzyme by down-regulating TFIIH kinase activity. Associates with the telomerase holoenzyme complex. Associates with spindle microtubules (MTs) in a TPX2-dependent manner. Interacts (via C-terminus) with actin; this interaction is direct and mediates association with the phosphorylated CTD of RNA polymerase II and is disrupted in presence of the long non-coding H19 RNA. Interacts with AURKA. Interacts (via C-terminus) with CBX5; this interaction is, at least in part, RNA-dependent. Interacts with CR2. Interacts with CRY1. Interacts (via C-terminus) with EP300; this interaction enhances DNA-binding to nuclear scaffold/matrix attachment region (S/MAR) elements. Interacts with ERBB4. Interacts with GEMIN5. Interacts with IGF2BP1. Interacts with IGF2BP2 and IGF2BP3. Interacts with NCL; this interaction occurs during mitosis. Interacts (via C-terminus) with NR3C1 (via C-terminus). Interacts with PLK1; this interaction induces phosphorylation of HNRNPU at Ser-58 in mitosis. Interacts with POU3F4. Interacts with SMARCA4; this interaction occurs in embryonic stem cells and stimulates global Pol II-mediated transcription. Interacts (via C-terminus) with TOP2A; this interaction protects the topoisomerase TOP2A from degradation and positively regulates the relaxation of supercoiled DNA by TOP2A in a RNA-dependent manner. Interacts with TPX2; this interaction recruits HNRNPU to spindle microtubules (MTs). Interacts with UBQLN2. Interacts (via RNA-binding RGG-box region) with ZBTB7B; the interaction facilitates the recruitment of long non-coding RNA Blnc1 by ZBTB7B. Interacts with ERCC6. In terms of processing, cleaved at Asp-94 by CASP3 during T-cell apoptosis, resulting in a loss of DNA- and chromatin-binding activities. Extensively phosphorylated. Phosphorylated on Ser-58 by PLK1 and dephosphorylated by protein phosphatase 2A (PP2A) in mitosis. Post-translationally, arg-707 and Arg-713 are dimethylated, probably to asymmetric dimethylarginine. In terms of processing, citrullinated by PADI4.

The protein resides in the nucleus. It localises to the nucleus matrix. The protein localises to the chromosome. Its subcellular location is the nucleus speckle. It is found in the cytoplasm. The protein resides in the cytoskeleton. It localises to the microtubule organizing center. The protein localises to the centrosome. Its subcellular location is the centromere. It is found in the kinetochore. The protein resides in the spindle. It localises to the spindle pole. The protein localises to the midbody. Its subcellular location is the cell surface. It is found in the cytoplasmic granule. In terms of biological role, DNA- and RNA-binding protein involved in several cellular processes such as nuclear chromatin organization, telomere-length regulation, transcription, mRNA alternative splicing and stability, Xist-mediated transcriptional silencing and mitotic cell progression. Plays a role in the regulation of interphase large-scale gene-rich chromatin organization through chromatin-associated RNAs (caRNAs) in a transcription-dependent manner, and thereby maintains genomic stability. Required for the localization of the long non-coding Xist RNA on the inactive chromosome X (Xi) and the subsequent initiation and maintenance of X-linked transcriptional gene silencing during X-inactivation. Required for the topoisomerase TOP2A protein stability and activity in a RNA-dependent manner. Plays a role as a RNA polymerase II (Pol II) holoenzyme transcription regulator. Promotes transcription initiation by direct association with the core-TFIIH basal transcription factor complex for the assembly of a functional pre-initiation complex with Pol II in a actin-dependent manner. Blocks Pol II transcription elongation activity by inhibiting the C-terminal domain (CTD) phosphorylation of Pol II and dissociates from Pol II pre-initiation complex prior to productive transcription elongation. Positively regulates CBX5-induced transcriptional gene silencing and retention of CBX5 in the nucleus. Negatively regulates glucocorticoid-mediated transcriptional activation. Key regulator of transcription initiation and elongation in embryonic stem cells upon leukemia inhibitory factor (LIF) signaling. Involved in the long non-coding RNA H19-mediated Pol II transcriptional repression. Participates in the circadian regulation of the core clock component BMAL1 transcription. Plays a role in the regulation of telomere length. Plays a role as a global pre-mRNA alternative splicing modulator by regulating U2 small nuclear ribonucleoprotein (snRNP) biogenesis. Plays a role in mRNA stability. Component of the CRD-mediated complex that promotes MYC mRNA stabilization. Enhances the expression of specific genes, such as tumor necrosis factor TNFA, by regulating mRNA stability, possibly through binding to the 3'-untranslated region (UTR). Plays a role in mitotic cell cycle regulation. Involved in the formation of stable mitotic spindle microtubules (MTs) attachment to kinetochore, spindle organization and chromosome congression. Phosphorylation at Ser-58 by PLK1 is required for chromosome alignement and segregation and progression through mitosis. Also contributes to the targeting of AURKA to mitotic spindle MTs. Binds to double- and single-stranded DNA and RNA, poly(A), poly(C) and poly(G) oligoribonucleotides. Binds to chromatin-associated RNAs (caRNAs). Associates with chromatin to scaffold/matrix attachment region (S/MAR) elements in DNA. Associates with chromatin in a chromatin-associated RNAs (caRNAs)-dependent manner. Binds to the Xist RNA. Binds the long non-coding H19 RNA. Binds to SMN1/2 pre-mRNAs at G/U-rich regions. Binds to small nuclear RNAs (snRNAs). Binds to the 3'-UTR of TNFA mRNA. Binds (via RNA-binding RGG-box region) to the long non-coding Xist RNA; this binding is direct and bridges the Xist RNA and the inactive chromosome X (Xi). Also negatively regulates embryonic stem cell differentiation upon LIF signaling. Required for embryonic development. Binds to brown fat long non-coding RNA 1 (Blnc1); facilitates the recruitment of Blnc1 by ZBTB7B required to drive brown and beige fat development and thermogenesis. This Rattus norvegicus (Rat) protein is Heterogeneous nuclear ribonucleoprotein U.